A 456-amino-acid polypeptide reads, in one-letter code: Adenylosuccinate synthetase isozyme 2 (456 aa).

A disordered region spans residues 1-24 (MAFAETYPAASSLPNGDCGRPRAR). Residues 39 to 45 (GDEGKGK) and 67 to 69 (GHT) each bind GTP. D40 acts as the Proton acceptor in catalysis. D40 and G67 together coordinate Mg(2+). Substrate is bound at residue D40. IMP contacts are provided by residues 40–43 (DEGK), 65–68 (NAGH), T162, R176, N255, T270, and R334. H68 (proton donor) is an active-site residue. 330-336 (VTTGRKR) is a substrate binding site. Residues R336, 362–364 (KLD), and 444–447 (GVGK) contribute to the GTP site.

Belongs to the adenylosuccinate synthetase family. Homodimer. It depends on Mg(2+) as a cofactor.

Its subcellular location is the cytoplasm. The protein resides in the mitochondrion. It catalyses the reaction IMP + L-aspartate + GTP = N(6)-(1,2-dicarboxyethyl)-AMP + GDP + phosphate + 2 H(+). It functions in the pathway purine metabolism; AMP biosynthesis via de novo pathway; AMP from IMP: step 1/2. Its activity is regulated as follows. Inhibited competitively by AMP and IMP and non-competitively by fructose 1,6-bisphosphate. Plays an important role in the de novo pathway and in the salvage pathway of purine nucleotide biosynthesis. Catalyzes the first committed step in the biosynthesis of AMP from IMP. This is Adenylosuccinate synthetase isozyme 2 from Homo sapiens (Human).